Here is a 424-residue protein sequence, read N- to C-terminus: Serine hydroxymethyltransferase 2 (424 aa).

Residues Leu-125 and 129 to 131 (GHL) each bind (6S)-5,6,7,8-tetrahydrofolate. Lys-234 is subject to N6-(pyridoxal phosphate)lysine. Position 250 (Glu-250) interacts with (6S)-5,6,7,8-tetrahydrofolate.

It belongs to the SHMT family. As to quaternary structure, homodimer. Pyridoxal 5'-phosphate is required as a cofactor.

Its subcellular location is the cytoplasm. The catalysed reaction is (6R)-5,10-methylene-5,6,7,8-tetrahydrofolate + glycine + H2O = (6S)-5,6,7,8-tetrahydrofolate + L-serine. It participates in one-carbon metabolism; tetrahydrofolate interconversion. The protein operates within amino-acid biosynthesis; glycine biosynthesis; glycine from L-serine: step 1/1. Catalyzes the reversible interconversion of serine and glycine with tetrahydrofolate (THF) serving as the one-carbon carrier. This reaction serves as the major source of one-carbon groups required for the biosynthesis of purines, thymidylate, methionine, and other important biomolecules. Also exhibits THF-independent aldolase activity toward beta-hydroxyamino acids, producing glycine and aldehydes, via a retro-aldol mechanism. In Burkholderia mallei (strain ATCC 23344), this protein is Serine hydroxymethyltransferase 2.